We begin with the raw amino-acid sequence, 874 residues long: Alanine--tRNA ligase (874 aa).

Positions 563, 567, 664, and 668 each coordinate Zn(2+).

Belongs to the class-II aminoacyl-tRNA synthetase family. Zn(2+) is required as a cofactor.

Its subcellular location is the cytoplasm. It carries out the reaction tRNA(Ala) + L-alanine + ATP = L-alanyl-tRNA(Ala) + AMP + diphosphate. Catalyzes the attachment of alanine to tRNA(Ala) in a two-step reaction: alanine is first activated by ATP to form Ala-AMP and then transferred to the acceptor end of tRNA(Ala). Also edits incorrectly charged Ser-tRNA(Ala) and Gly-tRNA(Ala) via its editing domain. The protein is Alanine--tRNA ligase of Methylobacillus flagellatus (strain ATCC 51484 / DSM 6875 / VKM B-1610 / KT).